Consider the following 73-residue polypeptide: Translation initiation factor IF-1 (73 aa).

One can recognise an S1-like domain in the interval 1–73 (MPKKEGVIEI…TRGRIVYRYK (73 aa)).

It belongs to the IF-1 family. Component of the 30S ribosomal translation pre-initiation complex which assembles on the 30S ribosome in the order IF-2 and IF-3, IF-1 and N-formylmethionyl-tRNA(fMet); mRNA recruitment can occur at any time during PIC assembly.

It localises to the cytoplasm. Its function is as follows. One of the essential components for the initiation of protein synthesis. Stabilizes the binding of IF-2 and IF-3 on the 30S subunit to which N-formylmethionyl-tRNA(fMet) subsequently binds. Helps modulate mRNA selection, yielding the 30S pre-initiation complex (PIC). Upon addition of the 50S ribosomal subunit IF-1, IF-2 and IF-3 are released leaving the mature 70S translation initiation complex. This Nocardioides sp. (strain ATCC BAA-499 / JS614) protein is Translation initiation factor IF-1.